The sequence spans 316 residues: Transaldolase (316 aa).

Catalysis depends on Lys132, which acts as the Schiff-base intermediate with substrate.

This sequence belongs to the transaldolase family. Type 1 subfamily. As to quaternary structure, homodimer.

It localises to the cytoplasm. The catalysed reaction is D-sedoheptulose 7-phosphate + D-glyceraldehyde 3-phosphate = D-erythrose 4-phosphate + beta-D-fructose 6-phosphate. It participates in carbohydrate degradation; pentose phosphate pathway; D-glyceraldehyde 3-phosphate and beta-D-fructose 6-phosphate from D-ribose 5-phosphate and D-xylulose 5-phosphate (non-oxidative stage): step 2/3. In terms of biological role, transaldolase is important for the balance of metabolites in the pentose-phosphate pathway. This Aliivibrio fischeri (strain ATCC 700601 / ES114) (Vibrio fischeri) protein is Transaldolase.